We begin with the raw amino-acid sequence, 336 residues long: Ornithine carbamoyltransferase, catabolic (336 aa).

Carbamoyl phosphate contacts are provided by residues 57-60 (STRT), Gln-84, Arg-108, and 135-138 (HPTQ). Residues Asn-168, Asp-232, and 236–237 (SM) contribute to the L-ornithine site. Carbamoyl phosphate-binding positions include 274–275 (CL) and Arg-321.

It belongs to the aspartate/ornithine carbamoyltransferase superfamily. OTCase family.

It is found in the cytoplasm. It carries out the reaction carbamoyl phosphate + L-ornithine = L-citrulline + phosphate + H(+). Its pathway is amino-acid degradation; L-arginine degradation via ADI pathway; carbamoyl phosphate from L-arginine: step 2/2. Its function is as follows. Reversibly catalyzes the transfer of the carbamoyl group from carbamoyl phosphate (CP) to the N(epsilon) atom of ornithine (ORN) to produce L-citrulline. In Burkholderia pseudomallei (strain K96243), this protein is Ornithine carbamoyltransferase, catabolic.